The sequence spans 499 residues: Sensor histidine kinase PdtaS (499 aa).

The interval 4-149 (LGDLLAEHTM…PLEGAYLDCA (146 aa)) is GAF. Residues 178 to 289 (DGFIRLNEGG…TEVKRRDRAL (112 aa)) are PAS-like. The Histidine kinase domain maps to 298–493 (EIHHRVKNNL…DVVLRVPIGR (196 aa)). H301 bears the Phosphohistidine; by autocatalysis mark.

In terms of processing, autophosphorylated.

It is found in the cytoplasm. It carries out the reaction ATP + protein L-histidine = ADP + protein N-phospho-L-histidine.. Member of the two-component regulatory system PdtaR/PdtaS. This two-component system plays an essential role in mycobacterial adaptation to poor nutrient conditions. Nutrient deprivation results in increasing intracellular concentrations of cyclic diguanosine monophosphate (c-di-GMP), which binds to the PdtaS sensor and promotes its autophosphorylation, leading to the activation of the signaling cascade. The phosphate group is then transferred to PdtaR. This Mycolicibacterium smegmatis (strain ATCC 700084 / mc(2)155) (Mycobacterium smegmatis) protein is Sensor histidine kinase PdtaS.